A 385-amino-acid polypeptide reads, in one-letter code: Calcium/calmodulin-dependent protein kinase type 1D (385 aa).

The Protein kinase domain maps to 23–279 (FEFKETLGTG…CEQAARHPWI (257 aa)). ATP contacts are provided by residues 29–37 (LGTGAFSEV) and lysine 52. Lysine 113 participates in a covalent cross-link: Glycyl lysine isopeptide (Lys-Gly) (interchain with G-Cter in SUMO2). Serine 122 carries the phosphoserine modification. Aspartate 144 acts as the Proton acceptor in catalysis. Threonine 180 bears the Phosphothreonine; by CaMKK1 and CaMKK2 mark. An autoinhibitory domain region spans residues 279–319 (IAGDTALSKNIHESVSAQIRKNFAKSKWRQAFNATAVVRHM). The tract at residues 299 to 320 (KNFAKSKWRQAFNATAVVRHMR) is calmodulin-binding. The short motif at 318–324 (HMRRLQL) is the Nuclear export signal element. Residues 363-385 (VAGVGAERRPRPTTVTTGHTGSK) form a disordered region. The span at 375-385 (TTVTTGHTGSK) shows a compositional bias: polar residues.

Belongs to the protein kinase superfamily. CAMK Ser/Thr protein kinase family. CaMK subfamily. Expressed ubiquitously with high levels in brain and low levels in kidney. Isoform 2 is highly expressed in brain compared to other tissues. In hematopoietic cell lines predominant expression was detected in T and EC cells.

It localises to the cytoplasm. Its subcellular location is the nucleus. The enzyme catalyses L-seryl-[protein] + ATP = O-phospho-L-seryl-[protein] + ADP + H(+). It carries out the reaction L-threonyl-[protein] + ATP = O-phospho-L-threonyl-[protein] + ADP + H(+). Activated by Ca(2+)/calmodulin. Binding of calmodulin results in conformational change that relieves intrasteric autoinhibition and allows phosphorylation of Thr-180 within the activation loop by CaMKK1 or CaMKK2. Phosphorylation of Thr-180 results in several fold increase in total activity. Unlike CaMK4, may be unable to exhibit autonomous activity after Ca(2+)/calmodulin activation. Functionally, calcium/calmodulin-dependent protein kinase that operates in the calcium-triggered CaMKK-CaMK1 signaling cascade and, upon calcium influx, activates CREB-dependent gene transcription, regulates calcium-mediated granulocyte function and respiratory burst and promotes basal dendritic growth of hippocampal neurons. In neutrophil cells, required for cytokine-induced proliferative responses and activation of the respiratory burst. Activates the transcription factor CREB1 in hippocampal neuron nuclei. May play a role in apoptosis of erythroleukemia cells. In vitro, phosphorylates transcription factor CREM isoform Beta. Isoform 1 but not isoform 2 activates CREB1. In Mus musculus (Mouse), this protein is Calcium/calmodulin-dependent protein kinase type 1D (Camk1d).